The primary structure comprises 382 residues: Transforming growth factor beta-1 proprotein (382 aa).

The signal sequence occupies residues 1 to 21; it reads MEVLWMLLVLLVLHLSSLAMS. The interval 22–65 is straightjacket domain; sequence LSTCKAVDMEEVRKRRIEAIRGQILSKLKLDKTPDVDSEKMTVP. Residues 66–263 are arm domain; sequence SEAIFLYNST…SMPAERIDTV (198 aa). Residues asparagine 73, asparagine 123, and asparagine 166 are each glycosylated (N-linked (GlcNAc...) asparagine). Residues 218–242 form a bowtie tail region; the sequence is PTPQAKDIDIEGFPALRGDLASLSS. The short motif at 234–236 is the Cell attachment site element; the sequence is RGD. Intrachain disulfides connect cysteine 277/cysteine 286, cysteine 285/cysteine 348, cysteine 314/cysteine 379, and cysteine 318/cysteine 381.

It belongs to the TGF-beta family. As to quaternary structure, latency-associated peptide: Homodimer; disulfide-linked. Latency-associated peptide: Interacts with Transforming growth factor beta-1 (TGF-beta-1) chain; interaction is non-covalent and maintains (TGF-beta-1) in a latent state; each Latency-associated peptide (LAP) monomer interacts with TGF-beta-1 in the other monomer. Transforming growth factor beta-1: Homodimer; disulfide-linked. Transforming growth factor beta-1: Interacts with TGF-beta receptors (tgfbr1 and tgfbr2), leading to signal transduction. Transforming growth factor beta-1 proprotein: The precursor proprotein is cleaved in the Golgi apparatus to form Transforming growth factor beta-1 (TGF-beta-1) and Latency-associated peptide (LAP) chains, which remain non-covalently linked, rendering TGF-beta-1 inactive.

Its subcellular location is the secreted. The protein resides in the extracellular space. The protein localises to the extracellular matrix. Functionally, transforming growth factor beta-1 proprotein: Precursor of the Latency-associated peptide (LAP) and Transforming growth factor beta-1 (TGF-beta-1) chains, which constitute the regulatory and active subunit of TGF-beta-1, respectively. Required to maintain the Transforming growth factor beta-1 (TGF-beta-1) chain in a latent state during storage in extracellular matrix. Associates non-covalently with TGF-beta-1 and regulates its activation via interaction with 'milieu molecules', such as LTBP1, LRRC32/GARP and LRRC33/NRROS, that control activation of TGF-beta-1. Interaction with integrins (ITGAV:ITGB6 or ITGAV:ITGB8) results in distortion of the Latency-associated peptide chain and subsequent release of the active TGF-beta-1. Its function is as follows. Transforming growth factor beta-1: Multifunctional protein that regulates the growth and differentiation of various cell types and is involved in various processes, such as normal development, immune function, microglia function and responses to neurodegeneration. Activation into mature form follows different steps: following cleavage of the proprotein in the Golgi apparatus, Latency-associated peptide (LAP) and Transforming growth factor beta-1 (TGF-beta-1) chains remain non-covalently linked rendering TGF-beta-1 inactive during storage in extracellular matrix. At the same time, LAP chain interacts with 'milieu molecules', such as ltbp1, lrrc32/garp and lrrc33/nrros that control activation of TGF-beta-1 and maintain it in a latent state during storage in extracellular milieus. TGF-beta-1 is released from LAP by integrins (ITGAV:ITGB6 or ITGAV:ITGB8): integrin-binding to LAP stabilizes an alternative conformation of the LAP bowtie tail and results in distortion of the LAP chain and subsequent release of the active TGF-beta-1. Once activated following release of LAP, TGF-beta-1 acts by binding to TGF-beta receptors (tgfbr1 and tgfbr2), which transduce signal. While expressed by many cells types, TGF-beta-1 only has a very localized range of action within cell environment thanks to fine regulation of its activation by Latency-associated peptide chain (LAP) and 'milieu molecules'. Plays an important role in bone remodeling: acts as a potent stimulator of osteoblastic bone formation. Can promote either T-helper 17 cells (Th17) or regulatory T-cells (Treg) lineage differentiation in a concentration-dependent manner. Can induce epithelial-to-mesenchymal transition (EMT) and cell migration in various cell types. This is Transforming growth factor beta-1 proprotein (tgfb1) from Xenopus laevis (African clawed frog).